Reading from the N-terminus, the 141-residue chain is Acetyltransferase YpeA (141 aa).

Residues 1-141 form the N-acetyltransferase domain; sequence MEIRVFRQED…GKRLIEDEEY (141 aa).

This sequence belongs to the acetyltransferase family. YpeA subfamily.

The chain is Acetyltransferase YpeA from Salmonella choleraesuis (strain SC-B67).